We begin with the raw amino-acid sequence, 485 residues long: Cyclic GMP-AMP synthase-like receptor (485 aa).

Residues serine 70 and 82–84 (EYD) contribute to the ATP site. Mg(2+) contacts are provided by glutamate 82, aspartate 84, and aspartate 204. Residues aspartate 204 and 247–254 (RLSFYEQE) each bind GTP. ATP contacts are provided by lysine 271 and lysine 274. Mn(2+)-binding residues include isoleucine 298 and aspartate 304.

Belongs to the mab-21 family. It depends on Mg(2+) as a cofactor. Requires Mn(2+) as cofactor.

It carries out the reaction GTP + ATP = 2',3'-cGAMP + 2 diphosphate. The catalysed reaction is GTP + ATP = pppGp(2'-5')A + diphosphate. It catalyses the reaction pppGp(2'-5')A = 2',3'-cGAMP + diphosphate. Nucleotidyltransferase that catalyzes the formation of cyclic GMP-AMP (2',3'-cGAMP) from ATP and GTP and plays a key role in innate immunity. Directly binds some unknown ligand, activating the nucleotidyltransferase activity, leading to synthesis of 2',3'-cGAMP, a second messenger that binds to and activates Sting, thereby triggering the immune response via activation of the NF-kappa-B transcription factor. This Trichogramma pretiosum (Parasitoid wasp) protein is Cyclic GMP-AMP synthase-like receptor.